Here is a 115-residue protein sequence, read N- to C-terminus: Putative HNH nuclease YajD (115 aa).

One can recognise an HNH domain in the interval 27-75; it reads CGRCSREFVYSNLRELTVHHIDHDHTNNPEDGSNWELLCLYCHDHEHSK.

Belongs to the HNH nuclease family.

The sequence is that of Putative HNH nuclease YajD (yajD) from Salmonella typhi.